Here is a 309-residue protein sequence, read N- to C-terminus: Malate dehydrogenase (309 aa).

Residues 8–13 and aspartate 33 each bind NAD(+); that span reads GAGLVG. 2 residues coordinate substrate: arginine 82 and arginine 88. Residues asparagine 95 and 118–120 contribute to the NAD(+) site; that span reads VSN. Substrate contacts are provided by asparagine 120 and arginine 151. Histidine 175 serves as the catalytic Proton acceptor.

It belongs to the LDH/MDH superfamily. MDH type 3 family.

It carries out the reaction (S)-malate + NAD(+) = oxaloacetate + NADH + H(+). Functionally, catalyzes the reversible oxidation of malate to oxaloacetate. The protein is Malate dehydrogenase of Pseudomonas putida (strain GB-1).